We begin with the raw amino-acid sequence, 403 residues long: S-adenosylmethionine synthase (403 aa).

Position 17 (histidine 17) interacts with ATP. Residue aspartate 19 coordinates Mg(2+). Glutamate 45 serves as a coordination point for K(+). Positions 58 and 104 each coordinate L-methionine. The flexible loop stretch occupies residues 104–114; sequence QSPDIAQGVDT. ATP is bound by residues 179–181, 250–251, aspartate 259, 265–266, alanine 282, and lysine 286; these read DGK, KF, and RK. Aspartate 259 is a binding site for L-methionine. Lysine 290 is an L-methionine binding site.

The protein belongs to the AdoMet synthase family. As to quaternary structure, homotetramer; dimer of dimers. The cofactor is Mg(2+). K(+) is required as a cofactor.

It is found in the cytoplasm. The enzyme catalyses L-methionine + ATP + H2O = S-adenosyl-L-methionine + phosphate + diphosphate. It functions in the pathway amino-acid biosynthesis; S-adenosyl-L-methionine biosynthesis; S-adenosyl-L-methionine from L-methionine: step 1/1. Functionally, catalyzes the formation of S-adenosylmethionine (AdoMet) from methionine and ATP. The overall synthetic reaction is composed of two sequential steps, AdoMet formation and the subsequent tripolyphosphate hydrolysis which occurs prior to release of AdoMet from the enzyme. The chain is S-adenosylmethionine synthase from Mycobacterium marinum (strain ATCC BAA-535 / M).